Consider the following 377-residue polypeptide: Opsin-2 (377 aa).

At 1 to 57 the chain is on the extracellular side; sequence MNNQSENYYHGAQFEALKSAGAIEMLGDGLTGDDLAAIPEHWLSYPAPPASAHTALA. Residue Asn-3 is glycosylated (N-linked (GlcNAc...) asparagine). The chain crosses the membrane as a helical span at residues 58-78; that stretch reads LLYIFFTFAALVGNGMVIFIF. Topologically, residues 79 to 89 are cytoplasmic; sequence STTKSLRTSSN. The chain crosses the membrane as a helical span at residues 90–110; sequence FLVLNLAILDFIMMAKAPIFI. The Extracellular portion of the chain corresponds to 111–126; sequence YNSAMRGFAVGTVGCQ. Cys-125 and Cys-202 form a disulfide bridge. Residues 127 to 146 form a helical membrane-spanning segment; sequence IFALMGAYSGIGAGMTNACI. Residues 147 to 166 lie on the Cytoplasmic side of the membrane; sequence AYDRHSTITRPLDGRLSEGK. A helical transmembrane segment spans residues 167–187; it reads VLLMVAFVWIYSTPWALLPLL. The Extracellular segment spans residues 188–214; that stretch reads KIWGRYVPEGYLTSCSFDYLTNTFDTK. Residues 215-235 traverse the membrane as a helical segment; it reads LFVACIFTCSYVFPMSLIIYF. The Cytoplasmic segment spans residues 236–283; the sequence is YSGIVKQVFAHEAALREQAKKMNVESLRANQGGSSESAEIRIAKAALT. The chain crosses the membrane as a helical span at residues 284-304; that stretch reads VCFLFVASWTPYGVMALIGAF. The Extracellular portion of the chain corresponds to 305-314; that stretch reads GNQQLLTPGV. The helical transmembrane segment at 315–335 threads the bilayer; it reads TMIPAVACKAVACISPWVYAI. Residues 336–377 are Cytoplasmic-facing; sequence RHPMYRQELQRRMPWLQIDEPDDTVSTATSNTTNSAPPAATA. The disordered stretch occupies residues 355 to 377; it reads EPDDTVSTATSNTTNSAPPAATA. Residues 361–377 show a composition bias toward low complexity; that stretch reads STATSNTTNSAPPAATA.

Belongs to the G-protein coupled receptor 1 family. Opsin subfamily. In the retina, expression is essentially uniformly distributed, but a higher level is seen in the dorsal region of the retina and in the dorsal rim retinulae.

The protein resides in the membrane. In terms of biological role, visual pigments are the light-absorbing molecules that mediate vision. They consist of an apoprotein, opsin, covalently linked to cis-retinal. May play a role in photoperiodic photoreception. The protein is Opsin-2 (OP2) of Manduca sexta (Tobacco hawkmoth).